The primary structure comprises 263 residues: Dihydromethanophenazine:CoB--CoM heterodisulfide reductase subunit E (263 aa).

5 helical membrane-spanning segments follow: residues 18–38, 108–128, 150–170, 184–204, and 221–241; these read TFVQ…YGLI, VMHL…GMMF, FLSI…LVAL, IMYD…GFIA, and VAPP…IAFI.

Belongs to the HdrE family. In terms of assembly, the dihydromethanophenazine:CoB--CoM heterodisulfide reductase is composed of two subunits; HdrD and HdrE. It depends on heme b as a cofactor.

It localises to the cell membrane. It catalyses the reaction methanophenazine + coenzyme B + coenzyme M = dihydromethanophenazine + coenzyme M-coenzyme B heterodisulfide. It participates in cofactor metabolism; coenzyme M-coenzyme B heterodisulfide reduction; coenzyme B and coenzyme M from coenzyme M-coenzyme B heterodisulfide: step 1/1. In terms of biological role, part of a complex that catalyzes the reversible reduction of CoM-S-S-CoB to the thiol-coenzymes H-S-CoM (coenzyme M) and H-S-CoB (coenzyme B). HdrE may be responsible for anchoring the complex to the membrane. The chain is Dihydromethanophenazine:CoB--CoM heterodisulfide reductase subunit E (hdrE) from Methanosarcina barkeri (strain Fusaro / DSM 804).